A 213-amino-acid chain; its full sequence is Octanoyltransferase (213 aa).

The 176-residue stretch at 32–207 folds into the BPL/LPL catalytic domain; that stretch reads ENSHDEIWLV…NILALLNNPP (176 aa). Substrate contacts are provided by residues 71 to 78, 138 to 140, and 151 to 153; these read RGGQVTYH, SLG, and GLA. The active-site Acyl-thioester intermediate is Cys169.

This sequence belongs to the LipB family.

It is found in the cytoplasm. It catalyses the reaction octanoyl-[ACP] + L-lysyl-[protein] = N(6)-octanoyl-L-lysyl-[protein] + holo-[ACP] + H(+). It participates in protein modification; protein lipoylation via endogenous pathway; protein N(6)-(lipoyl)lysine from octanoyl-[acyl-carrier-protein]: step 1/2. Its function is as follows. Catalyzes the transfer of endogenously produced octanoic acid from octanoyl-acyl-carrier-protein onto the lipoyl domains of lipoate-dependent enzymes. Lipoyl-ACP can also act as a substrate although octanoyl-ACP is likely to be the physiological substrate. This Salmonella paratyphi A (strain ATCC 9150 / SARB42) protein is Octanoyltransferase.